The sequence spans 23 residues: DDLFNINAGIVKLFGVTTLDVVR.

Residue Asn7 participates in NAD(+) binding. Residue Arg23 coordinates substrate.

The protein belongs to the LDH/MDH superfamily. MDH type 1 family. As to quaternary structure, homodimer.

The catalysed reaction is (S)-malate + NAD(+) = oxaloacetate + NADH + H(+). This Pseudotsuga menziesii (Douglas-fir) protein is Malate dehydrogenase.